We begin with the raw amino-acid sequence, 76 residues long: Small ribosomal subunit protein uS17 (76 aa).

Belongs to the universal ribosomal protein uS17 family. In terms of assembly, part of the 30S ribosomal subunit.

In terms of biological role, one of the primary rRNA binding proteins, it binds specifically to the 5'-end of 16S ribosomal RNA. In Dinoroseobacter shibae (strain DSM 16493 / NCIMB 14021 / DFL 12), this protein is Small ribosomal subunit protein uS17.